The sequence spans 296 residues: Small ribosomal subunit protein uS2 (296 aa).

2 disordered regions span residues 1–24 (MNTK…TQSQ) and 270–296 (HELK…EASQ).

It belongs to the universal ribosomal protein uS2 family.

This Mycoplasmopsis synoviae (strain 53) (Mycoplasma synoviae) protein is Small ribosomal subunit protein uS2.